Here is a 231-residue protein sequence, read N- to C-terminus: 5'-methylthioadenosine/S-adenosylhomocysteine nucleosidase (231 aa).

The active-site Proton acceptor is the E12. Substrate-binding positions include G78, M153, and 174-175 (ME). D198 acts as the Proton donor in catalysis.

It belongs to the PNP/UDP phosphorylase family. MtnN subfamily.

The enzyme catalyses S-adenosyl-L-homocysteine + H2O = S-(5-deoxy-D-ribos-5-yl)-L-homocysteine + adenine. The catalysed reaction is S-methyl-5'-thioadenosine + H2O = 5-(methylsulfanyl)-D-ribose + adenine. It carries out the reaction 5'-deoxyadenosine + H2O = 5-deoxy-D-ribose + adenine. It functions in the pathway amino-acid biosynthesis; L-methionine biosynthesis via salvage pathway; S-methyl-5-thio-alpha-D-ribose 1-phosphate from S-methyl-5'-thioadenosine (hydrolase route): step 1/2. In terms of biological role, catalyzes the irreversible cleavage of the glycosidic bond in both 5'-methylthioadenosine (MTA) and S-adenosylhomocysteine (SAH/AdoHcy) to adenine and the corresponding thioribose, 5'-methylthioribose and S-ribosylhomocysteine, respectively. Also cleaves 5'-deoxyadenosine, a toxic by-product of radical S-adenosylmethionine (SAM) enzymes, into 5-deoxyribose and adenine. The chain is 5'-methylthioadenosine/S-adenosylhomocysteine nucleosidase from Bacillus cereus (strain G9842).